We begin with the raw amino-acid sequence, 109 residues long: Large ribosomal subunit protein P1A (109 aa).

Residues 69–84 (APVAGGAAAPAAADGE) show a composition bias toward low complexity. Residues 69–109 (APVAGGAAAPAAADGEAPAEEKEEAKEEEESDEDMGFGLFD) are disordered. Residues 94-103 (KEEEESDEDM) are compositionally biased toward acidic residues.

It belongs to the eukaryotic ribosomal protein P1/P2 family. Component of the large ribosomal subunit (LSU). Mature yeast ribosomes consist of a small (40S) and a large (60S) subunit. The 40S small subunit contains 1 molecule of ribosomal RNA (18S rRNA) and at least 33 different proteins. The large 60S subunit contains 3 rRNA molecules (25S, 5.8S and 5S rRNA) and at least 46 different proteins. The acidic ribosomal P-proteins form the stalk structure of the 60S subunit. They are organized as a pentameric complex in which uL10/P0 interacts with 2 heterodimers of P1 and P2 proteins.

It localises to the cytoplasm. Its function is as follows. Component of the ribosome, a large ribonucleoprotein complex responsible for the synthesis of proteins in the cell. The small ribosomal subunit (SSU) binds messenger RNAs (mRNAs) and translates the encoded message by selecting cognate aminoacyl-transfer RNA (tRNA) molecules. The large subunit (LSU) contains the ribosomal catalytic site termed the peptidyl transferase center (PTC), which catalyzes the formation of peptide bonds, thereby polymerizing the amino acids delivered by tRNAs into a polypeptide chain. The nascent polypeptides leave the ribosome through a tunnel in the LSU and interact with protein factors that function in enzymatic processing, targeting, and the membrane insertion of nascent chains at the exit of the ribosomal tunnel. This is Large ribosomal subunit protein P1A (rpp101) from Schizosaccharomyces pombe (strain 972 / ATCC 24843) (Fission yeast).